A 234-amino-acid chain; its full sequence is Probable chemoreceptor glutamine deamidase CheD 1 (234 aa).

A disordered region spans residues 183–234 (AREAAGPRGERAARARPRVELFGTPAPKAQATPRIELFGTRATQPATRKQEA). The span at 190 to 201 (RGERAARARPRV) shows a compositional bias: basic and acidic residues. Positions 223–234 (RATQPATRKQEA) are enriched in polar residues.

It belongs to the CheD family.

It catalyses the reaction L-glutaminyl-[protein] + H2O = L-glutamyl-[protein] + NH4(+). Its function is as follows. Probably deamidates glutamine residues to glutamate on methyl-accepting chemotaxis receptors (MCPs), playing an important role in chemotaxis. The polypeptide is Probable chemoreceptor glutamine deamidase CheD 1 (Burkholderia thailandensis (strain ATCC 700388 / DSM 13276 / CCUG 48851 / CIP 106301 / E264)).